The chain runs to 1196 residues: Calcium-activated potassium channel subunit alpha-1 (1196 aa).

The Extracellular segment spans residues 1-52 (MATWNASQIILNSMSNIIESPQSKPRPVMASNGASLFIPVTMEVPCDQGTRM). Residues 53–73 (WWAFLASSMVTFFGGLFIILV) form a helical membrane-spanning segment. Over 74–146 (WRTFKYLWTV…MISAQTLTGR (73 aa)) the chain is Cytoplasmic. The chain crosses the membrane as a helical span at residues 147 to 167 (VLVVTVFALSIGALMIYFIDS). The Extracellular portion of the chain corresponds to 168–182 (SNPIESCQNFYKDFT). The chain crosses the membrane as a helical span at residues 183 to 203 (LQIDMAFNIFFLLYFGLRFIA). At 204 to 207 (ANDK) the chain is on the cytoplasmic side. The chain crosses the membrane as a helical span at residues 208-228 (LWFWLEVNSVVDFFTVPPVFV). Residues 229 to 232 (SVYL) lie on the Extracellular side of the membrane. A helical; Voltage-sensor transmembrane segment spans residues 233–253 (NRSWLGLRFLRALRLIQFSEI). At 254–268 (LQFLNILKTSNSIKL) the chain is on the cytoplasmic side. Residues 269–289 (VNLCSIFISTWLTAAGFIHLV) form a helical membrane-spanning segment. Topologically, residues 290-303 (ENSGDPWRNFENSQ) are extracellular. Residues 304 to 326 (DLSYWECMYLLMVTMSTVGYGDV) constitute an intramembrane region (pore-forming). Residues 320-323 (TVGY) carry the Selectivity for potassium motif. Over 327-335 (YAKTTLGRL) the chain is Extracellular. A helical membrane pass occupies residues 336–356 (FMVFFILGGLAMFASYVPEII). Residues 357–1196 (ELIGNRKKYG…PPIREVEDEC (840 aa)) are Cytoplasmic-facing. An RCK N-terminal 1 domain is found at 375–517 (RKHIVVCGHI…WNWKDGDDAI (143 aa)). Positions 407, 430, and 432 each coordinate Mg(2+). The segment S7 stretch occupies residues 524 to 544 (LGFIAQSCLAQGLSTMLANLF). The segment at 581-601 (LSFPAVCELCFVKLKLLMIAI) is segment S8. The tract at residues 645–649 (CKACH) is heme-binding motif. The segment at 672-697 (SALSPKKKQRNGGMRHSPNTSPNMMR) is disordered. The tract at residues 748–768 (VLSGHVVVCIFGDMTSALIGV) is segment S9. Positions 750 to 894 (SGHVVVCIFG…MERSSPDNSP (145 aa)) constitute an RCK N-terminal 2 domain. Residues 914 to 936 (TELVNDSNVQFLDQDDDDDPDTE) carry the Calcium bowl motif. Ca(2+) contacts are provided by Gln923, Asp926, Asp929, and Asp931. The interval 943-963 (FACGTAFAVSVLDSLMSATYF) is segment S10. Over residues 1098 to 1119 (ASLSHSSHSSHSSSKKSSSVTS) the composition is skewed to low complexity. A disordered region spans residues 1098–1149 (ASLSHSSHSSHSSSKKSSSVTSILHTASANRQNRVKARDSRDKQKMGQAEKK). Positions 1120–1129 (ILHTASANRQ) are enriched in polar residues. The segment covering 1133 to 1149 (KARDSRDKQKMGQAEKK) has biased composition (basic and acidic residues).

Belongs to the potassium channel family. Calcium-activated (TC 1.A.1.3) subfamily. KCa1.1/KCNMA1 sub-subfamily. In terms of assembly, homotetramer; which constitutes the calcium-activated potassium channel. In terms of tissue distribution, expressed in both the somites and neural tube of 1 day embryos. Within the nervous system, it is restricted to dorsal parts, and expressed centrally in regions dedicated to processing of sensory information. Six hours later, it is expressed segmentally within the somites. At this time, it is expressed in a primary sensory organ, the trigeminal ganglion. By 2 days, it is also expressed in other primary sensory organs, such as the otic vesicle, and the eye. Within the retina, it is expressed to an internal layer. In the developing otic vesicle, it is abundantly expressed near the apical surface. Isoform 3 is neural-specific, and is only expressed during late stages of neuronal differentiation.

It is found in the cell membrane. The catalysed reaction is K(+)(in) = K(+)(out). With respect to regulation, ethanol and carbon monoxide-bound heme increase channel activation. Heme inhibits channel activation. Its function is as follows. Potassium channel activated by both membrane depolarization or increase in cytosolic Ca(2+) that mediates export of K(+). It is also activated by the concentration of cytosolic Mg(2+). Its activation dampens the excitatory events that elevate the cytosolic Ca(2+) concentration and/or depolarize the cell membrane. It therefore contributes to repolarization of the membrane potential. Plays a key role in controlling excitability in a number of systems, such as regulation of the contraction of smooth muscle, the tuning of hair cells in the cochlea, regulation of transmitter release, and innate immunity. In smooth muscles, its activation by high level of Ca(2+), caused by ryanodine receptors in the sarcoplasmic reticulum, regulates the membrane potential. In cochlea cells, its number and kinetic properties partly determine the characteristic frequency of each hair cell and thereby helps to establish a tonotopic map. Highly sensitive to both iberiotoxin (IbTx) and charybdotoxin (CTX). The chain is Calcium-activated potassium channel subunit alpha-1 (kcnma1) from Xenopus laevis (African clawed frog).